An 805-amino-acid chain; its full sequence is Cell division cycle 5-related protein (805 aa).

HTH myb-type domains are found at residues 1–58 (MPRI…DPSI) and 59–108 (KKTE…DQAQ). DNA-binding regions (H-T-H motif) lie at residues 31–54 (WSRIASLLHRKSAKQCKARWYEWL) and 82–104 (WRTIAPLIGRTAAQCLERYEYLL). The span at 108 to 127 (QAKEGDKDEGDDPRKLRPGE) shows a compositional bias: basic and acidic residues. 4 disordered regions span residues 108–143 (QAKEGDKDEGDDPRKLRPGEIDPNPETKPARPDPID), 246–293 (HLEG…HVKK), 409–442 (LSTPYRTPGEGSGSTPRQGMTPRGAIGTPSQRSV), and 530–556 (LERRRRSQAVQRELPRPSNVNTSVLRP). Positions 142 to 193 (IDMDEDELEMLSEARARLANTQGKKAKRKAREKQLEEARRLAALQKRRELRA) form a coiled coil. Basic and acidic residues predominate over residues 246–274 (HLEGKMRDEIEQQERKKDKERMKKKKESD). Coiled coils occupy residues 511 to 542 (EDAADIDERALALRAKQEELERRRRSQAVQRE) and 678 to 804 (YTRA…SKLQ).

Belongs to the CEF1 family. In terms of assembly, component of the precatalytic, catalytic and postcatalytic spliceosome complexes.

It localises to the nucleus. The protein localises to the cytoplasm. Functionally, DNA-binding protein involved in cell cycle control. May act as a transcription activator. Plays a role in pre-mRNA splicing as core component of precatalytic, catalytic and postcatalytic spliceosomal complexes. May also play a role in the response to DNA damage (DDR). This chain is Cell division cycle 5-related protein (cdc5l), found in Nematostella vectensis (Starlet sea anemone).